A 485-amino-acid chain; its full sequence is Glutamyl-tRNA(Gln) amidotransferase subunit A (485 aa).

Residues Lys-80 and Ser-155 each act as charge relay system in the active site. Residue Ser-179 is the Acyl-ester intermediate of the active site.

It belongs to the amidase family. GatA subfamily. Heterotrimer of A, B and C subunits.

It catalyses the reaction L-glutamyl-tRNA(Gln) + L-glutamine + ATP + H2O = L-glutaminyl-tRNA(Gln) + L-glutamate + ADP + phosphate + H(+). Its function is as follows. Allows the formation of correctly charged Gln-tRNA(Gln) through the transamidation of misacylated Glu-tRNA(Gln) in organisms which lack glutaminyl-tRNA synthetase. The reaction takes place in the presence of glutamine and ATP through an activated gamma-phospho-Glu-tRNA(Gln). The polypeptide is Glutamyl-tRNA(Gln) amidotransferase subunit A (Endomicrobium trichonymphae).